A 68-amino-acid chain; its full sequence is Protein SlyX homolog (68 aa).

It belongs to the SlyX family.

This chain is Protein SlyX homolog, found in Pseudomonas putida (strain ATCC 700007 / DSM 6899 / JCM 31910 / BCRC 17059 / LMG 24140 / F1).